The sequence spans 85 residues: Large ribosomal subunit protein bL27 (85 aa).

The tract at residues Met-1–Lys-24 is disordered.

This sequence belongs to the bacterial ribosomal protein bL27 family.

The protein is Large ribosomal subunit protein bL27 of Geotalea daltonii (strain DSM 22248 / JCM 15807 / FRC-32) (Geobacter daltonii).